The sequence spans 141 residues: MAVQRTFSIIKPDAVAKNVIGKITTRFEEAGLKIVASKIKQLSKAEAEGFYAEHSARGFFGDLVAFMTSGPVVVQVLEGENAIALNRELMGATNPKEAAAGTIRADFAESIDANAVHGSDSEAAAAREIAYFFAATEVTTR.

The ATP site is built by Lys-11, Phe-59, Arg-87, Thr-93, Arg-104, and Asn-114. The active-site Pros-phosphohistidine intermediate is His-117.

This sequence belongs to the NDK family. Homotetramer. The cofactor is Mg(2+).

The protein localises to the cytoplasm. The enzyme catalyses a 2'-deoxyribonucleoside 5'-diphosphate + ATP = a 2'-deoxyribonucleoside 5'-triphosphate + ADP. It carries out the reaction a ribonucleoside 5'-diphosphate + ATP = a ribonucleoside 5'-triphosphate + ADP. Functionally, major role in the synthesis of nucleoside triphosphates other than ATP. The ATP gamma phosphate is transferred to the NDP beta phosphate via a ping-pong mechanism, using a phosphorylated active-site intermediate. This chain is Nucleoside diphosphate kinase, found in Pseudomonas putida (strain GB-1).